Consider the following 381-residue polypeptide: Guanine nucleotide-binding protein G(olf) subunit alpha (381 aa).

The segment at 1–25 is disordered; sequence MGCLGNSSKTAEDQGVDEKERREAN. Residue Gly2 is the site of N-palmitoyl glycine attachment. The S-palmitoyl cysteine moiety is linked to residue Cys3. Residues 10 to 25 show a composition bias toward basic and acidic residues; that stretch reads TAEDQGVDEKERREAN. One can recognise a G-alpha domain in the interval 41–381; sequence ATHRLLLLGA…RMHLKQYELL (341 aa). Positions 44–57 are G1 motif; sequence RLLLLGAGESGKST. GTP is bound by residues Glu52, Ser53, Gly54, Lys55, Ser56, and Thr57. Ser56 serves as a coordination point for Mg(2+). Position 178 is a phosphothreonine (Thr178). The interval 183-191 is G2 motif; sequence DLLRCRVLT. GTP-binding residues include Leu185, Arg186, and Thr191. Mg(2+) contacts are provided by Thr191 and Asp210. Positions 206–215 are G3 motif; that stretch reads FHMFDVGGQR. Residues Gly213, Asn279, Lys280, Asp282, and Ala353 each coordinate GTP. The tract at residues 275–282 is G4 motif; the sequence is ILFLNKQD. The tract at residues 351 to 356 is G5 motif; it reads TCAVDT.

The protein belongs to the G-alpha family. G(s) subfamily. In terms of assembly, g proteins are composed of 3 units; alpha, beta and gamma. The alpha chain contains the guanine nucleotide binding site. Interacts with GAS2L2. Interacts (GDP-bound form) with RIC8B (via C-terminus); promoting GNAL folding and association with the plasma membrane.

Its subcellular location is the cell membrane. It carries out the reaction GTP + H2O = GDP + phosphate + H(+). Its function is as follows. Guanine nucleotide-binding protein (G protein) involved as transducer in olfactory signal transduction controlled by G protein-coupled receptors (GPCRs). Contains the guanine nucleotide binding site and alternates between an active, GTP-bound state and an inactive, GDP-bound state. Signaling by an activated GPCR promotes GDP release and GTP binding. The alpha subunit has a low GTPase activity that converts bound GTP to GDP, thereby terminating the signal. Both GDP release and GTP hydrolysis are modulated by numerous regulatory proteins. GNAL/G(olf) alpha specifically mediates olfactory signal transduction within the olfactory neuroepithelium and the basal ganglia following GPCRs activation. Acts by promoting the specific activation of adenylyl cyclase ADCY3, resulting in increased levels of the signaling molecule cAMP. In Mus musculus (Mouse), this protein is Guanine nucleotide-binding protein G(olf) subunit alpha.